Consider the following 387-residue polypeptide: 3-ketoacyl-CoA thiolase (387 aa).

Residue Cys91 is the Acyl-thioester intermediate of the active site. Catalysis depends on proton acceptor residues His343 and Cys373.

This sequence belongs to the thiolase-like superfamily. Thiolase family. In terms of assembly, heterotetramer of two alpha chains (FadB) and two beta chains (FadA).

The protein localises to the cytoplasm. It carries out the reaction an acyl-CoA + acetyl-CoA = a 3-oxoacyl-CoA + CoA. It functions in the pathway lipid metabolism; fatty acid beta-oxidation. Its function is as follows. Catalyzes the final step of fatty acid oxidation in which acetyl-CoA is released and the CoA ester of a fatty acid two carbons shorter is formed. In Aliivibrio fischeri (strain ATCC 700601 / ES114) (Vibrio fischeri), this protein is 3-ketoacyl-CoA thiolase.